The sequence spans 137 residues: Phospholipase A2 group V (137 aa).

The first 20 residues, 1-20 (MKRLLTLAWFLACSVPAVPG), serve as a signal peptide directing secretion. 6 cysteine pairs are disulfide-bonded: cysteine 46-cysteine 137, cysteine 48-cysteine 64, cysteine 63-cysteine 117, cysteine 70-cysteine 110, cysteine 79-cysteine 103, and cysteine 97-cysteine 108. Residues tyrosine 47, glycine 49, and glycine 51 each coordinate Ca(2+). Histidine 67 is an active-site residue. Aspartate 68 serves as a coordination point for Ca(2+). The active site involves aspartate 111.

Belongs to the phospholipase A2 family. The cofactor is Ca(2+). Post-translationally, this enzyme lacks one of the seven disulfide bonds found in similar PA2 proteins.

It localises to the secreted. The protein localises to the cell membrane. It is found in the cytoplasmic vesicle. The protein resides in the phagosome. Its subcellular location is the recycling endosome. It localises to the golgi apparatus. The protein localises to the cis-Golgi network. It is found in the trans-Golgi network. It carries out the reaction a 1,2-diacyl-sn-glycero-3-phosphocholine + H2O = a 1-acyl-sn-glycero-3-phosphocholine + a fatty acid + H(+). It catalyses the reaction 1-hexadecanoyl-2-(9Z-octadecenoyl)-sn-glycero-3-phosphocholine + H2O = 1-hexadecanoyl-sn-glycero-3-phosphocholine + (9Z)-octadecenoate + H(+). The enzyme catalyses 1-hexadecanoyl-2-(5Z,8Z,11Z,14Z-eicosatetraenoyl)-sn-glycero-3-phosphocholine + H2O = 1-hexadecanoyl-sn-glycero-3-phosphocholine + (5Z,8Z,11Z,14Z)-eicosatetraenoate + H(+). The catalysed reaction is 1-hexadecanoyl-2-(9Z,12Z-octadecadienoyl)-sn-glycero-3-phosphoethanolamine + H2O = 1-hexadecanoyl-sn-glycero-3-phosphoethanolamine + (9Z,12Z)-octadecadienoate + H(+). It carries out the reaction 1-hexadecanoyl-2-(5Z,8Z,11Z,14Z-eicosatetraenoyl)-sn-glycero-3-phosphoethanolamine + H2O = 1-hexadecanoyl-sn-glycero-3-phosphoethanolamine + (5Z,8Z,11Z,14Z)-eicosatetraenoate + H(+). It catalyses the reaction 1-octadecanoyl-2-(5Z,8Z,11Z,14Z-eicosatetraenoyl)-sn-glycero-3-phospho-(1D-myo-inositol) + H2O = 1-octadecanoyl-sn-glycero-3-phospho-(1D-myo-inositol) + (5Z,8Z,11Z,14Z)-eicosatetraenoate + H(+). The enzyme catalyses 1-hexadecanoyl-2-(9Z-octadecenoyl)-sn-glycero-3-phosphoglycerol + H2O = 1-hexadecanoyl-sn-glycero-3-phosphoglycerol + (9Z)-octadecenoate + H(+). The catalysed reaction is N-hexadecanoyl-1,2-di-(9Z-octadecenoyl)-sn-glycero-3-phosphoethanolamine + H2O = N-hexadecanoyl-1-(9Z-octadecenoyl)-sn-glycero-3-phosphoethanolamine + (9Z)-octadecenoate + H(+). It carries out the reaction 1'-[1,2-di-(9Z-octadecenoyl)-sn-glycero-3-phospho]-3'-[1-(9Z-octadecenoyl)-sn-glycero-3-phospho]-glycerol + H2O = 1',3'-bis-[1-(9Z-octadecenoyl)-sn-glycero-3-phospho]-glycerol + (9Z)-octadecenoate + H(+). It catalyses the reaction 1',3'-bis[1,2-di-(9Z-octadecenoyl)-sn-glycero-3-phospho]-glycerol + H2O = 1'-[1,2-di-(9Z-octadecenoyl)-sn-glycero-3-phospho]-3'-[1-(9Z-octadecenoyl)-sn-glycero-3-phospho]-glycerol + (9Z)-octadecenoate + H(+). It functions in the pathway lipid metabolism; phospholipid metabolism. Its pathway is lipid metabolism; leukotriene B4 biosynthesis. The protein operates within lipid metabolism; leukotriene C4 biosynthesis. Secretory calcium-dependent phospholipase A2 that primarily targets extracellular phospholipids. Hydrolyzes the ester bond of the fatty acyl group attached at sn-2 position of phospholipids (phospholipase A2 activity), preferentially releasing fatty acyl groups with a low degree of unsaturation such as oleoyl (C18:1) and linoleoyl (C18:2) groups. Hydrolyzes low-density lipoprotein (LDL) phospholipids releasing unsaturated fatty acids that drive macrophage polarization toward an M2 phenotype. May act in an autocrine and paracrine manner. Contributes to lipid remodeling of cellular membranes at different subcellular locations and generation of lipid mediators involved in pathogen clearance. Cleaves sn-2 fatty acyl chains of cardiolipin, a major component of the inner membrane of mitochondria and bacterial membranes. Promotes phagocytosis of bacteria in macrophages through production of lysophosphatidylethanolamines. Displays bactericidal activity against Gram-positive bacteria by directly hydrolyzing phospholipids of the bacterial membrane. Promotes phagocytosis and killing of ingested fungi likely through controlling phagosome-lysosome fusion and phagosome maturation. Plays a role in biosynthesis of cysteinyl leukotrienes (CysLTs) in myeloid cells. In eosinophils, triggers perinuclear arachidonate release and LTC4 synthesis in a PLA2G4A-independent way. In neutrophils, amplifies CysLTs biosynthesis initiated by PLA2G4A. Promotes immune complex clearance in macrophages via stimulating synthesis of CysLTs, which act through CYSLTR1 to trigger phagocytosis. May regulate antigen processing in antigen-presenting cells. In pulmonary macrophages regulates IL33 production required for activation of group 2 innate lymphoid cells. May play a role in the biosynthesis of N-acyl ethanolamines that regulate energy metabolism. Hydrolyzes N-acyl phosphatidylethanolamines to N-acyl lysophosphatidylethanolamines, which are further cleaved by a lysophospholipase D to release N-acyl ethanolamines. The chain is Phospholipase A2 group V (Pla2g5) from Rattus norvegicus (Rat).